Here is a 307-residue protein sequence, read N- to C-terminus: Farnesol kinase, chloroplastic (307 aa).

The N-terminal 65 residues, 1 to 65 (MATTSTTTKL…TKIRKSSLAA (65 aa)), are a transit peptide targeting the chloroplast. 7 helical membrane passes run 77–97 (VCAFGVTSIVAFSCLGFWGEI), 116–136 (IGLVFMLCWPLFSSGIQGALF), 137–157 (ASLVPGLNIVRMLLLGLGVYH), 177–194 (GPLYYVLSITSACIYYWK), 197–217 (PIAIAVICNLCAGDGMADIVG), 237–257 (IGMATAGFLASVAYMYYFASF), and 265–285 (GMILRFLVISIASALVESLPI).

This sequence belongs to the polyprenol kinase family.

It is found in the plastid. The protein localises to the chloroplast membrane. The catalysed reaction is (2E,6E)-farnesol + CTP = (2E,6E)-farnesyl phosphate + CDP + H(+). The enzyme catalyses (2E,6E)-farnesol + ATP = (2E,6E)-farnesyl phosphate + ADP + H(+). It carries out the reaction (2E)-geraniol + ATP = (2E)-geranyl phosphate + ADP + H(+). It catalyses the reaction (2E,6E,10E)-geranylgeraniol + ATP = (2E,6E,10E)-geranylgeranyl phosphate + ADP + H(+). Kinase involved in negative regulation of abscisic acid (ABA) signaling. Substrate preference is farnesol &gt; geraniol &gt; geranylgeraniol, but has no activity with farnesyl phosphate. Can use CTP &gt; ATP &gt; GTP = UTP as phosphoryl donor. The sequence is that of Farnesol kinase, chloroplastic from Arabidopsis thaliana (Mouse-ear cress).